Here is a 935-residue protein sequence, read N- to C-terminus: Coatomer subunit gamma (935 aa).

5 HEAT repeats span residues 258–296, 337–372, 373–410, 412–449, and 524–562; these read PQLF…RNSR, PEKI…TGTS, KNIS…NFPQ, WKSI…FVPQ, and PTLY…ARNK. The disordered stretch occupies residues 630–656; the sequence is KSETTLDTTPEAESVPEKRADANSFAG. The residue at position 638 (threonine 638) is a Phosphothreonine. A Phosphoserine modification is found at serine 643. Lysine 647 participates in a covalent cross-link: Glycyl lysine isopeptide (Lys-Gly) (interchain with G-Cter in ubiquitin). Serine 653 carries the phosphoserine modification.

This sequence belongs to the COPG family. Oligomeric complex that consists of at least the alpha, beta, beta', gamma, delta, epsilon and zeta subunits. Interacts (via C-terminus) with GEA1 (via N-terminal region) and KEI1 (via C-terminal region).

It is found in the cytoplasm. The protein localises to the golgi apparatus membrane. It localises to the cytoplasmic vesicle. Its subcellular location is the COPI-coated vesicle membrane. The protein resides in the endosome. In terms of biological role, the coatomer is a cytosolic protein complex that binds to dilysine motifs and reversibly associates with Golgi non-clathrin-coated vesicles, which further mediate biosynthetic protein transport from the ER, via the Golgi up to the trans Golgi network. Coatomer complex is required for budding from Golgi membranes, and is essential for the retrograde Golgi-to-ER transport of dilysine-tagged proteins. This chain is Coatomer subunit gamma (SEC21), found in Saccharomyces cerevisiae (strain ATCC 204508 / S288c) (Baker's yeast).